A 652-amino-acid polypeptide reads, in one-letter code: Carboxypeptidase Z (652 aa).

The first 20 residues, 1-20 (MPTTPLLLAALAALAALAVA), serve as a signal peptide directing secretion. Residues 41 to 163 (THSATCVDLH…APEEEGCYDP (123 aa)) form the FZ domain. Intrachain disulfides connect Cys46-Cys112, Cys54-Cys105, Cys96-Cys132, Cys121-Cys160, and Cys125-Cys149. N-linked (GlcNAc...) asparagine glycosylation occurs at Asn60. One can recognise a Peptidase M14 domain in the interval 189-505 (AHHSYAQMVR…EPLLNFLEMV (317 aa)). 2 residues coordinate Zn(2+): His251 and Glu254. A glycan (N-linked (GlcNAc...) asparagine) is linked at Asn284. A Zn(2+)-binding site is contributed by His383. Residue Glu475 is the Proton donor/acceptor of the active site. The interval 594-628 (FLPGPSRALPRSLDPQGAPAQLDFEPPRARRQPAS) is disordered.

The protein belongs to the peptidase M14 family. Zn(2+) serves as cofactor. Abundantly expressed in the placenta, with low to moderate levels in the brain, lung, thymus and kidney.

It localises to the secreted. The protein resides in the extracellular space. The protein localises to the extracellular matrix. Its activity is regulated as follows. Inhibited by 2-mercaptomethyl-3-guanidinoethylthiopropanoic acid (MGTA) and guanidinoethylmercaptosuccinic acid (GEMSA). Inhibited by chelating agents such as EDTA and EGTA. Functionally, cleaves substrates with C-terminal arginine residues. Probably modulates the Wnt signaling pathway, by cleaving some undefined protein. May play a role in cleavage during prohormone processing. This chain is Carboxypeptidase Z (Cpz), found in Rattus norvegicus (Rat).